Here is a 249-residue protein sequence, read N- to C-terminus: Bis(5'-nucleosyl)-tetraphosphatase PrpE [asymmetrical] (249 aa).

This sequence belongs to the PrpE family. Ni(2+) serves as cofactor.

It catalyses the reaction P(1),P(4)-bis(5'-guanosyl) tetraphosphate + H2O = GMP + GTP + 2 H(+). In terms of biological role, asymmetrically hydrolyzes Ap4p to yield AMP and ATP. This Bacillus velezensis (strain DSM 23117 / BGSC 10A6 / LMG 26770 / FZB42) (Bacillus amyloliquefaciens subsp. plantarum) protein is Bis(5'-nucleosyl)-tetraphosphatase PrpE [asymmetrical].